Reading from the N-terminus, the 97-residue chain is UPF0235 protein DET1292 (97 aa).

Belongs to the UPF0235 family.

This Dehalococcoides mccartyi (strain ATCC BAA-2266 / KCTC 15142 / 195) (Dehalococcoides ethenogenes (strain 195)) protein is UPF0235 protein DET1292.